The chain runs to 506 residues: Histidine ammonia-lyase (506 aa).

Positions 143-145 (ASG) form a cross-link, 5-imidazolinone (Ala-Gly). Residue Ser144 is modified to 2,3-didehydroalanine (Ser).

The protein belongs to the PAL/histidase family. Contains an active site 4-methylidene-imidazol-5-one (MIO), which is formed autocatalytically by cyclization and dehydration of residues Ala-Ser-Gly.

It localises to the cytoplasm. It catalyses the reaction L-histidine = trans-urocanate + NH4(+). Its pathway is amino-acid degradation; L-histidine degradation into L-glutamate; N-formimidoyl-L-glutamate from L-histidine: step 1/3. The sequence is that of Histidine ammonia-lyase from Salmonella gallinarum (strain 287/91 / NCTC 13346).